A 554-amino-acid chain; its full sequence is Hydroxylamine reductase (554 aa).

Residues Cys-3, Cys-6, Cys-18, and Cys-25 each contribute to the [2Fe-2S] cluster site. Hybrid [4Fe-2O-2S] cluster contacts are provided by His-252, Glu-276, Cys-320, Cys-408, Cys-436, Cys-461, Glu-495, and Lys-497. The residue at position 408 (Cys-408) is a Cysteine persulfide.

The protein belongs to the HCP family. [2Fe-2S] cluster serves as cofactor. It depends on hybrid [4Fe-2O-2S] cluster as a cofactor.

Its subcellular location is the cytoplasm. It catalyses the reaction A + NH4(+) + H2O = hydroxylamine + AH2 + H(+). Functionally, catalyzes the reduction of hydroxylamine to form NH(3) and H(2)O. This is Hydroxylamine reductase from Shewanella sp. (strain MR-7).